Here is a 343-residue protein sequence, read N- to C-terminus: DNA-directed RNA polymerase subunit alpha (343 aa).

Residues 1–239 (MGETVTIQKN…DQLNVFVNFE (239 aa)) form an alpha N-terminal domain (alpha-NTD) region. The interval 255 to 343 (FNPAFLKKVD…ELAKRFEDHY (89 aa)) is alpha C-terminal domain (alpha-CTD).

The protein belongs to the RNA polymerase alpha chain family. Homodimer. The RNAP catalytic core consists of 2 alpha, 1 beta, 1 beta' and 1 omega subunit. When a sigma factor is associated with the core the holoenzyme is formed, which can initiate transcription.

It catalyses the reaction RNA(n) + a ribonucleoside 5'-triphosphate = RNA(n+1) + diphosphate. Its function is as follows. DNA-dependent RNA polymerase catalyzes the transcription of DNA into RNA using the four ribonucleoside triphosphates as substrates. In Bradyrhizobium diazoefficiens (strain JCM 10833 / BCRC 13528 / IAM 13628 / NBRC 14792 / USDA 110), this protein is DNA-directed RNA polymerase subunit alpha.